Consider the following 520-residue polypeptide: 2-isopropylmalate synthase (520 aa).

Residues 12–274 (VVIFDTTLRD…DTGIDTTMLT (263 aa)) form the Pyruvate carboxyltransferase domain. Residues D21, H209, H211, and N245 each coordinate Mn(2+). Residues 398–520 (KLLSLSVIAG…RLHAQHAAVV (123 aa)) form a regulatory domain region.

It belongs to the alpha-IPM synthase/homocitrate synthase family. LeuA type 1 subfamily. In terms of assembly, homodimer. It depends on Mn(2+) as a cofactor.

It localises to the cytoplasm. It carries out the reaction 3-methyl-2-oxobutanoate + acetyl-CoA + H2O = (2S)-2-isopropylmalate + CoA + H(+). Its pathway is amino-acid biosynthesis; L-leucine biosynthesis; L-leucine from 3-methyl-2-oxobutanoate: step 1/4. In terms of biological role, catalyzes the condensation of the acetyl group of acetyl-CoA with 3-methyl-2-oxobutanoate (2-ketoisovalerate) to form 3-carboxy-3-hydroxy-4-methylpentanoate (2-isopropylmalate). The chain is 2-isopropylmalate synthase from Methylorubrum populi (strain ATCC BAA-705 / NCIMB 13946 / BJ001) (Methylobacterium populi).